The following is a 357-amino-acid chain: MTLWVVKLGTSLLRGDTAATIAGFAAGIAAAFARGDRVVLVSSGAVGLGCQRLQLPQRPETVVALQAAAATGQGQLMALYERALANHGIAVAQILVTRSDLADRRRYQNASGTLQQLLQWGVLPVVNENDAISPAELRFGDNDTLSALVAAAVGADQLILLTDVDRLYSADPRLVVDARPISDVHHPRELDALEAVAGDGGRWGRGGMTTKLAAARIATASGITVHLADGRDPRRLDALLQGERGGTVFHPHPEPLGNRRSWLAHALQPQGELTLDAGACDALHQRGSSLLMVGITAVKGVFGANQPVRLQGPDGRELGRGLCQLSSAAVQRALDAAPAAGPSPVVVHRDALVLHSR.

K7 is a binding site for ATP. The substrate site is built by S43, D130, and N142. An ATP-binding site is contributed by T162 to D163. The region spanning Q270 to V347 is the PUA domain.

This sequence belongs to the glutamate 5-kinase family.

The protein resides in the cytoplasm. It catalyses the reaction L-glutamate + ATP = L-glutamyl 5-phosphate + ADP. It functions in the pathway amino-acid biosynthesis; L-proline biosynthesis; L-glutamate 5-semialdehyde from L-glutamate: step 1/2. Catalyzes the transfer of a phosphate group to glutamate to form L-glutamate 5-phosphate. The polypeptide is Glutamate 5-kinase (Parasynechococcus marenigrum (strain WH8102)).